Consider the following 131-residue polypeptide: Leptin receptor overlapping transcript-like 1 (131 aa).

Helical transmembrane passes span 7 to 27 (LISL…GCAL), 32 to 52 (QYWP…YCIA), 69 to 89 (LAIF…VVFA), and 100 to 120 (ALVL…FLVF).

The protein belongs to the OB-RGRP/VPS55 family. In terms of assembly, interacts with RAB13.

It is found in the membrane. In terms of biological role, negatively regulates growth hormone (GH) receptor cell surface expression in liver. May play a role in liver resistance to GH during periods of reduced nutrient availability. In Rattus norvegicus (Rat), this protein is Leptin receptor overlapping transcript-like 1 (Leprotl1).